Consider the following 396-residue polypeptide: tRNA (guanine-N(7)-)-methyltransferase non-catalytic subunit wuho (396 aa).

4 WD repeats span residues 75 to 115 (KVEV…AQLL), 162 to 201 (GHLS…DIHS), 205 to 243 (GHKE…ELLL), and 302 to 342 (AGTW…RASG).

It belongs to the WD repeat TRM82 family. In terms of assembly, forms a heterodimer with the catalytic subunit Mettl1. Interacts with mei-P26 and weakly interacts with bgcn; required for the function or formation of the mei-P26-bgcn-bam-sxl complex. Interacts with nanos; may be involved in mei-P26-dependent derepression of the BMP signaling pathway. Interacts with Myc; the interaction may be mediated by mei-P26 and may be involved in the regulation of ribosome biogenesis. In terms of tissue distribution, in testis, it is present at high level in hub cells, a niche for germline stem cells of testis. Ubiquitously expressed in all testicular cells throughout spermatogenesis. Ubiquitously expressed in all germline and somatic cells of the ovary.

It localises to the nucleus. It is found in the cytoplasm. The protein operates within tRNA modification; N(7)-methylguanine-tRNA biosynthesis. Required for the Mettl1-dependent formation of N(7)-methylguanine at position 46 (m7G46) in tRNA. In the Mettl1-wuho methyltransferase complex, it is required to stabilize and induce conformational changes of the catalytic subunit. Required for binding of nanos mRNA and repression of translation by the mei-P26-bgcn-bam-sxl complex. May cooperate with mei-P26 and nanos to derepress the BMP signaling pathway. May cooperate with mei-P26 to suppress expression of a subset of microRNAs. May cooperate with mei-P26 to regulate bam expression levels in germline cells during gametogenesis. Required to promote mitosis to meiosis transition during gametogenesis. May regulate germline cell division in part by regulating ribosome biogenesis. The protein is tRNA (guanine-N(7)-)-methyltransferase non-catalytic subunit wuho of Drosophila pseudoobscura pseudoobscura (Fruit fly).